Consider the following 235-residue polypeptide: Urease accessory protein UreF (235 aa).

This sequence belongs to the UreF family. In terms of assembly, ureD, UreF and UreG form a complex that acts as a GTP-hydrolysis-dependent molecular chaperone, activating the urease apoprotein by helping to assemble the nickel containing metallocenter of UreC. The UreE protein probably delivers the nickel.

It localises to the cytoplasm. Functionally, required for maturation of urease via the functional incorporation of the urease nickel metallocenter. This is Urease accessory protein UreF from Haemophilus influenzae (strain PittEE).